Reading from the N-terminus, the 361-residue chain is P2Y purinoceptor 4 (361 aa).

The Extracellular portion of the chain corresponds to 1-30 (MTSADSLLFTSLGPSPSSGDGDCKFNEEFK). A helical membrane pass occupies residues 31 to 58 (FILLPLSYAVVFVLGLALNAPTLWLFLF). Over 59–68 (RLRPWDATAT) the chain is Cytoplasmic. Residues 69-91 (YMFHLALSDTLYVLSLPTLVYYY) traverse the membrane as a helical segment. The Extracellular segment spans residues 92–108 (AARNHWPFGTGFCKFVR). An intrachain disulfide couples cysteine 104 to cysteine 181. The chain crosses the membrane as a helical span at residues 109 to 127 (FLFYWNLYCSVLFLTCISV). Residues 128–149 (HRYMGICHPLRAIRWGRPRFAG) are Cytoplasmic-facing. A helical membrane pass occupies residues 150 to 170 (LLCLGVWLVVAGCLVPNLFFV). Over 171–192 (TTNANGTTILCHDTTLPEEFDH) the chain is Extracellular. An N-linked (GlcNAc...) asparagine glycan is attached at asparagine 175. The chain crosses the membrane as a helical span at residues 193-218 (YVYFSSTIMVLLFGFPFLITLVCYGL). Residues 219-242 (MARRLYRPLPGAGQSSSRLRSLRT) are Cytoplasmic-facing. The helical transmembrane segment at 243–265 (IAVVLTVFAVCFVPFHITRTIYY) threads the bilayer. Over 266-283 (LARLLNAECRVLNIVNVV) the chain is Extracellular. The chain crosses the membrane as a helical span at residues 284–305 (YKVTRPLASANSCLDPVLYLFT). Over 306–361 (GDKYRNQLQQLCRGSTPKRRTTASSLALVTLHEESISRWADIHQDSIFPAYEGDRL) the chain is Cytoplasmic.

The protein belongs to the G-protein coupled receptor 1 family. Post-translationally, phosphorylation of Ser-329 and Ser-330 is a key step in agonist-dependent desensitization and loss of surface P2RY4. This phosphorylation does not involve PKC, nor other calcium-activated kinases. In terms of tissue distribution, expressed in the liver, intestine, stomach, bladder and lung.

Its subcellular location is the cell membrane. Functionally, receptor for ATP and UTP coupled to G-proteins that activate a phosphatidylinositol-calcium second messenger system. The polypeptide is P2Y purinoceptor 4 (P2ry4) (Mus musculus (Mouse)).